A 1968-amino-acid polypeptide reads, in one-letter code: Signal element on autosome protein 2 (1968 aa).

Over residues 72 to 88 (TSSSFSSSLATTTTTSS) the composition is skewed to low complexity. Disordered stretches follow at residues 72–252 (TSSS…TPTQ) and 271–364 (QVQQ…VQEQ). A compositionally biased stretch (basic residues) spans 107–119 (SHHHPSSSHHHHP). 4 stretches are compositionally biased toward low complexity: residues 120-134 (GQQQ…SHLQ), 144-165 (HPYY…YGQA), 219-232 (DQPS…LPPL), and 298-338 (LSSI…SSSS). Residues 346–362 (PNASSSSLIKRQSQDVQ) are compositionally biased toward polar residues. A C2H2-type 1 zinc finger spans residues 413–440 (YQCPNCNRNLANARNLQRHRQTCGSAQH). Disordered regions lie at residues 451–499 (RSPP…LYSP) and 538–601 (WSRD…TLDP). The segment covering 452–467 (SPPPCASAPPVAPPTA) has biased composition (pro residues). A compositionally biased stretch (polar residues) spans 472-482 (FQHHNSTGNLT). A compositionally biased stretch (low complexity) spans 483 to 498 (LSYSSSSSRHQSSLYS). Positions 570 to 594 (PLHHLDSFDSADHRKETPRECHEPD) are enriched in basic and acidic residues. The C2H2-type 2; degenerate zinc finger occupies 651 to 672 (FTCEACKKSVSSERSLRRHYNT). Disordered stretches follow at residues 681-712 (AASG…GPEK) and 785-854 (VTSA…TGNP). Residues 690 to 702 (TTKRKPATKRPSK) show a composition bias toward basic residues. A compositionally biased stretch (low complexity) spans 794-804 (HQLPHQQPQQQ). Acidic residues predominate over residues 812 to 824 (LLNEQDESADDDG). The segment covering 827 to 851 (RSSSGTVSNSTTTTTTATTTSSKST) has biased composition (low complexity). A C2H2-type 3; degenerate zinc finger spans residues 856–875 (FTCEHCARQLCSMSNLKRHR). Disordered stretches follow at residues 882–905 (ASSS…TAPA), 975–1069 (GDAL…EHKN), 1083–1227 (RMDA…SPLD), and 1246–1273 (PGPL…SQQA). Low complexity-rich tracts occupy residues 981–1015 (QQHQ…AGRI), 1023–1046 (ILNQ…MLNP), and 1108–1131 (PQRS…YQVQ). Residues 1136 to 1146 (PLPPMQLPPLQ) show a composition bias toward pro residues. Residues 1147-1185 (NPHNQQQQHQMLHQSQMNYQQVQQVQQVQHVQQQQNLQN) show a composition bias toward low complexity. Composition is skewed to polar residues over residues 1201 to 1211 (APGNRSRSHSN) and 1251 to 1273 (QGQS…SQQA). The C2H2-type 4 zinc finger occupies 1274–1297 (YICPECKKTYASRKNVKRHRMAVH). Disordered regions lie at residues 1333-1478 (TPDS…ADEE), 1569-1608 (SVGL…QQQQ), 1624-1671 (HPPM…LTCS), and 1769-1822 (ADRQ…PSTN). The segment covering 1388 to 1403 (ERQEPPKKPVADDHKS) has biased composition (basic and acidic residues). Pro residues-rich tracts occupy residues 1407 to 1421 (PLPP…PPPY) and 1429 to 1445 (LNPP…PPLQ). Positions 1589–1608 (QHPQQHPQQHPQQHPQQQQQ) are enriched in low complexity. Over residues 1624-1633 (HPPMPVSQQF) the composition is skewed to polar residues. Residues 1668–1694 (LTCSGCKKILGSDYSLRRHRAGCADVQ) form a C2H2-type 5; degenerate zinc finger. A compositionally biased stretch (low complexity) spans 1800-1811 (SSSSSSSTSSAS). The C2H2-type 6 zinc-finger motif lies at 1826 to 1858 (HYCQFPECGKNFSSEWNLARHTRESCKMTTRAH).

In terms of tissue distribution, expressed in seam cells, intestine cells, pharyngeal muscles and nerve ring neurons.

It is found in the nucleus. The protein resides in the cytoplasm. Functionally, RNA-binding protein, which regulates the expression of proteins required to control developmental timing of events during the L2 to L3 larval stage switch. Binds to the 3'UTR of the transcript of the heterochronic protein lin-28 to post-transcriptionally negatively regulate its expression in certain tissue types in the later larval stages. During larval development, controls the timing of seam cell division and terminal differentiation into adult alae. In vitro, it can also bind to DNA through its first zinc finger. May bind directly or indirectly to the promoter of the sex-determining factor xol-1 to activate its transcription. Its activation of xol-1 transcription controls sex determination and X chromosome dosage compensation to promote male development. Through the negative regulation of lin-28 transcript, it also has a role in the fox-1-sex-1-mediated determination of sexual fate. Acts in the intestine to play a role in regulating adult lifespan. In Caenorhabditis elegans, this protein is Signal element on autosome protein 2.